The following is a 472-amino-acid chain: Siroheme synthase 1 (472 aa).

Residues 1 to 203 (MDYLPLFADL…GQLTEAENEL (203 aa)) form a precorrin-2 dehydrogenase /sirohydrochlorin ferrochelatase region. NAD(+) is bound by residues 22–23 (EV) and 43–44 (QT). A Phosphoserine modification is found at Ser-128. Positions 215–472 (GEVALVGAGP…AISPSVVNLA (258 aa)) are uroporphyrinogen-III C-methyltransferase. Pro-224 contributes to the S-adenosyl-L-methionine binding site. Asp-247 serves as the catalytic Proton acceptor. Lys-269 acts as the Proton donor in catalysis. Residues 300 to 302 (GGD), Ile-305, 330 to 331 (TA), Met-382, and Gly-411 each bind S-adenosyl-L-methionine.

It in the N-terminal section; belongs to the precorrin-2 dehydrogenase / sirohydrochlorin ferrochelatase family. The protein in the C-terminal section; belongs to the precorrin methyltransferase family.

It carries out the reaction uroporphyrinogen III + 2 S-adenosyl-L-methionine = precorrin-2 + 2 S-adenosyl-L-homocysteine + H(+). The enzyme catalyses precorrin-2 + NAD(+) = sirohydrochlorin + NADH + 2 H(+). The catalysed reaction is siroheme + 2 H(+) = sirohydrochlorin + Fe(2+). The protein operates within cofactor biosynthesis; adenosylcobalamin biosynthesis; precorrin-2 from uroporphyrinogen III: step 1/1. It functions in the pathway cofactor biosynthesis; adenosylcobalamin biosynthesis; sirohydrochlorin from precorrin-2: step 1/1. Its pathway is porphyrin-containing compound metabolism; siroheme biosynthesis; precorrin-2 from uroporphyrinogen III: step 1/1. It participates in porphyrin-containing compound metabolism; siroheme biosynthesis; siroheme from sirohydrochlorin: step 1/1. The protein operates within porphyrin-containing compound metabolism; siroheme biosynthesis; sirohydrochlorin from precorrin-2: step 1/1. Its function is as follows. Multifunctional enzyme that catalyzes the SAM-dependent methylations of uroporphyrinogen III at position C-2 and C-7 to form precorrin-2 via precorrin-1. Then it catalyzes the NAD-dependent ring dehydrogenation of precorrin-2 to yield sirohydrochlorin. Finally, it catalyzes the ferrochelation of sirohydrochlorin to yield siroheme. This is Siroheme synthase 1 from Yersinia pseudotuberculosis serotype I (strain IP32953).